We begin with the raw amino-acid sequence, 297 residues long: ABSCISIC ACID-INSENSITIVE 5-like protein 2 (297 aa).

3 positions are modified to phosphoserine: serine 21, serine 43, and serine 81. Disordered stretches follow at residues 100–119 (IQQN…QPTL) and 138–157 (IPGS…SGAG). Threonine 118 carries the phosphothreonine modification. A compositionally biased stretch (gly residues) spans 146–157 (PVGGGSAGSGAG). A bZIP domain is found at 225-288 (VERRQKRMIK…SVPPPDPKRQ (64 aa)). The segment at 227–246 (RRQKRMIKNRESAARSRARK) is basic motif. The segment at 253–267 (LEIKVSRLEEENERL) is leucine-zipper. The tract at residues 272–297 (EVEKILPSVPPPDPKRQLRRTSSAPF) is disordered.

The protein belongs to the bZIP family. ABI5 subfamily. DNA-binding heterodimer with ABI5/DPBF1, DPBF2 or EEL/DPBF4. Interacts with the AFP proteins AFP1, AFP2, AFP3 and AFP4. Predominantly expressed in seeds.

It localises to the nucleus. Functionally, binds to the embryo specification element and the ABA-responsive element (ABRE) of the Dc3 gene promoter. Could participate in abscisic acid-regulated gene expression during seed development. The protein is ABSCISIC ACID-INSENSITIVE 5-like protein 2 (DPBF3) of Arabidopsis thaliana (Mouse-ear cress).